We begin with the raw amino-acid sequence, 476 residues long: MQNPHIPSFAQARVLVAGDVMLDRYWHGPTSRISPEAPVPVVRVTELEDRPGGAANVALNMAALGARAELVGVTGRDEAASILEERLAAAEVGCHFQKVDGLPTITKLRVISRQQQLLRLDFEEAFHSQDPAPFAEQVKQQLVHCGALVLSDYAKGALRDCPGLIALAREAGVPVLVDPKGTDFEPYRGATLLTPNLSEFEAVVGVVKDEQDLIAKGQQLIRDLDLQAMLVTRSEKGMTLLRDGLPELHLPARAREVFDVTGAGDTVISVLAVSLAAGAAMEDAVALANIAAGIVVAKLGTAVVSAPELRRAVHQEGGSGRGVMSEAQLLIAIEDARAQGERIVFTNGCFDIIHAGHVGYLDTARRQGDRLVLAVNGDESIRRLKGPGRPINPLERRMAVLAALEAVDWVVAFDTDTPEPLLESIKPDVLVKGGDYSVDQVVGHEFVKSYGGEVKVLDFIDDISTTKIVERIREKD.

The tract at residues 1–320 (MQNPHIPSFA…RAVHQEGGSG (320 aa)) is ribokinase. 196–199 (NLSE) provides a ligand contact to ATP. Residue Asp265 is part of the active site. Residues 345-476 (FTNGCFDIIH…KIVERIREKD (132 aa)) are cytidylyltransferase.

This sequence in the N-terminal section; belongs to the carbohydrate kinase PfkB family. It in the C-terminal section; belongs to the cytidylyltransferase family. In terms of assembly, homodimer.

It catalyses the reaction D-glycero-beta-D-manno-heptose 7-phosphate + ATP = D-glycero-beta-D-manno-heptose 1,7-bisphosphate + ADP + H(+). The enzyme catalyses D-glycero-beta-D-manno-heptose 1-phosphate + ATP + H(+) = ADP-D-glycero-beta-D-manno-heptose + diphosphate. Its pathway is nucleotide-sugar biosynthesis; ADP-L-glycero-beta-D-manno-heptose biosynthesis; ADP-L-glycero-beta-D-manno-heptose from D-glycero-beta-D-manno-heptose 7-phosphate: step 1/4. It functions in the pathway nucleotide-sugar biosynthesis; ADP-L-glycero-beta-D-manno-heptose biosynthesis; ADP-L-glycero-beta-D-manno-heptose from D-glycero-beta-D-manno-heptose 7-phosphate: step 3/4. In terms of biological role, catalyzes the phosphorylation of D-glycero-D-manno-heptose 7-phosphate at the C-1 position to selectively form D-glycero-beta-D-manno-heptose-1,7-bisphosphate. Its function is as follows. Catalyzes the ADP transfer from ATP to D-glycero-beta-D-manno-heptose 1-phosphate, yielding ADP-D-glycero-beta-D-manno-heptose. In Alcanivorax borkumensis (strain ATCC 700651 / DSM 11573 / NCIMB 13689 / SK2), this protein is Bifunctional protein HldE.